The primary structure comprises 451 residues: Cytochrome c biogenesis protein CcsB (451 aa).

The next 3 helical transmembrane spans lie at Leu30–Ile50, Thr89–Thr109, and Ile175–Ala195.

The protein belongs to the Ccs1/CcsB family. May interact with CcsA.

It is found in the cellular thylakoid membrane. Functionally, required during biogenesis of c-type cytochromes (cytochrome c6 and cytochrome f) at the step of heme attachment. The polypeptide is Cytochrome c biogenesis protein CcsB (Crocosphaera subtropica (strain ATCC 51142 / BH68) (Cyanothece sp. (strain ATCC 51142))).